The primary structure comprises 265 residues: uncharacterized protein (265 aa).

Belongs to the MG067/MG068/MG395 family.

This is an uncharacterized protein from Mycoplasma pneumoniae (strain ATCC 29342 / M129 / Subtype 1) (Mycoplasmoides pneumoniae).